We begin with the raw amino-acid sequence, 246 residues long: Probable transcriptional regulatory protein WRi_002620 (246 aa).

The tract at residues 1–22 (MAGHSQFSNIKHRKGAQDAKRS) is disordered.

It belongs to the TACO1 family.

The protein resides in the cytoplasm. The protein is Probable transcriptional regulatory protein WRi_002620 of Wolbachia sp. subsp. Drosophila simulans (strain wRi).